A 159-amino-acid chain; its full sequence is Adult-specific rigid cuticular protein 15.7 (159 aa).

In terms of domain architecture, Chitin-binding type R&amp;R spans 23–89 (LGNYAFNYGI…SIKTNEPGTA (67 aa)).

Functionally, component of the rigid cuticle of the spider. This Araneus diadematus (European garden spider) protein is Adult-specific rigid cuticular protein 15.7.